Reading from the N-terminus, the 500-residue chain is MVLSKTVSQSDVSIHSTFASRYVRTSLPRFKMPDNSIPKEAAYQIINDELMLDGNPRLNLASFVTTWMEPECDKLMMDSINKNYVDMDEYPVTTELQNRCVNMIAHLFNAPLEDGETAVGVGTVGSSEAIMLAGLAFKRKWQNKMKAQGKPCDKPNIVTGANVQVCWEKFARYFEVELKEVKLSEGYYVMDPEKAVEMVDENTICVAAILGSTLNGEFEDVKRLNDLLVEKNKETGWDTPIHVDAASGGFIAPFIYPELEWDFRLPLVKSINVSGHKYGLVYAGIGWVVWRNKDDLPDELIFHINYLGADQPTFTLNFSKGSSQVIAQYYQLIRLGYEGYKNVMENCQENASVLREGLEKTGRFNIISKEIGVPLVAFSLKDNRQHNEFEISETLRRFGWIVPAYTMPPNAQHITVLRVVIREDFSRTLAERLVRDIEKVLHELDTLPARVNAKLAVAEEQAAANGSEVHKKTDSEVQLEMITAWKKFVEEKKKKTNRVC.

Lys-277 is modified (N6-(pyridoxal phosphate)lysine). Residues 469–500 (VHKKTDSEVQLEMITAWKKFVEEKKKKTNRVC) form a calmodulin-binding region.

The protein belongs to the group II decarboxylase family. In terms of assembly, homodimer. Pyridoxal 5'-phosphate serves as cofactor.

It carries out the reaction L-glutamate + H(+) = 4-aminobutanoate + CO2. In terms of biological role, catalyzes the production of GABA. The calmodulin-binding is calcium-dependent and it is proposed that this may, directly or indirectly, form a calcium regulated control of GABA biosynthesis. The sequence is that of Glutamate decarboxylase (GAD) from Petunia hybrida (Petunia).